Consider the following 389-residue polypeptide: UDP-D-apiose/UDP-D-xylose synthase 2 (389 aa).

Residues Phe28, Ile29, Asp49, Asn76, Ile77, and Leu96 each coordinate NAD(+). The UDP-alpha-D-glucuronate site is built by Tyr105, Thr139, Glu141, Arg182, and Tyr185. NAD(+)-binding residues include Tyr185 and Lys189. Tyr185 functions as the Proton acceptor in the catalytic mechanism. Residue Asn214 participates in UDP-alpha-D-glucuronate binding. Residues Trp215 and Arg235 each contribute to the NAD(+) site. 7 residues coordinate UDP-alpha-D-glucuronate: Lys251, Val253, Arg260, Tyr331, Tyr335, Asp337, and Arg341.

It belongs to the NAD(P)-dependent epimerase/dehydratase family. In terms of assembly, homodimer and heterodimer with AXS1. NAD(+) is required as a cofactor. As to expression, widely expressed with stronger expression in dark-grown seedlings, leaves and stems, and lower levels in flowers, siliques, pistils, pollen and roots.

It localises to the cytoplasm. It catalyses the reaction UDP-alpha-D-glucuronate + H(+) = UDP-alpha-D-xylose + CO2. It carries out the reaction UDP-alpha-D-glucuronate + H(+) = UDP-alpha-D-apiose + CO2. Its function is as follows. Together with AXS1, catalyzes the conversion of UDP-D-glucuronate into a mixture of UDP-D-apiose (UDP-Api) as the main product and UDP-D-xylose to a lesser extent, via a cycle of oxidation and reduction. D-Apiose (3-C-hydroxymethyl-d-erythrose) is the only plant cell wall monosaccharide with a branched carbon skeleton and is found in rhamnogalacturonan II (RG-II), apiogalacturonan, and several apioglycosides. The chain is UDP-D-apiose/UDP-D-xylose synthase 2 from Arabidopsis thaliana (Mouse-ear cress).